A 90-amino-acid polypeptide reads, in one-letter code: Large ribosomal subunit protein bL31 (90 aa).

The interval 65 to 90 is disordered; the sequence is YSKQEGSGSKSNKSKSTKSKKGKGKK. Over residues 76–90 the composition is skewed to basic residues; that stretch reads NKSKSTKSKKGKGKK.

The protein belongs to the bacterial ribosomal protein bL31 family. Type A subfamily. As to quaternary structure, part of the 50S ribosomal subunit.

Functionally, binds the 23S rRNA. The sequence is that of Large ribosomal subunit protein bL31 from Trichodesmium erythraeum (strain IMS101).